A 348-amino-acid polypeptide reads, in one-letter code: Glycerol-1-phosphate dehydrogenase [NAD(P)+] (348 aa).

Residues 94–98 (GKPID) and 116–119 (TAAS) each bind NAD(+). D121 contributes to the substrate binding site. S125 serves as a coordination point for NAD(+). D168 is a binding site for substrate. Positions 168 and 248 each coordinate Zn(2+). Residue H252 participates in substrate binding. A Zn(2+)-binding site is contributed by H264.

It belongs to the glycerol-1-phosphate dehydrogenase family. Requires Zn(2+) as cofactor.

It is found in the cytoplasm. It catalyses the reaction sn-glycerol 1-phosphate + NAD(+) = dihydroxyacetone phosphate + NADH + H(+). The enzyme catalyses sn-glycerol 1-phosphate + NADP(+) = dihydroxyacetone phosphate + NADPH + H(+). It functions in the pathway membrane lipid metabolism; glycerophospholipid metabolism. Catalyzes the NAD(P)H-dependent reduction of dihydroxyacetonephosphate (DHAP or glycerone phosphate) to glycerol 1-phosphate (G1P). The G1P thus generated is used as the glycerophosphate backbone of phospholipids in the cellular membranes of Archaea. This Haloquadratum walsbyi (strain DSM 16790 / HBSQ001) protein is Glycerol-1-phosphate dehydrogenase [NAD(P)+].